Reading from the N-terminus, the 765-residue chain is Putative U-box domain-containing protein 50 (765 aa).

Residues 198 to 391 (QEIENYFQQL…NRRIEFCKER (194 aa)) adopt a coiled-coil conformation. Residues 422–765 (SDRLRLKSGG…HSKRAAQASS (344 aa)) enclose the Protein kinase domain. ATP-binding positions include 428–436 (KSGGNWTNV) and K449. Residues 688-762 (DIPSVFMCPI…QDWHSKRAAQ (75 aa)) enclose the U-box domain.

The protein belongs to the protein kinase superfamily. Ser/Thr protein kinase family.

It carries out the reaction S-ubiquitinyl-[E2 ubiquitin-conjugating enzyme]-L-cysteine + [acceptor protein]-L-lysine = [E2 ubiquitin-conjugating enzyme]-L-cysteine + N(6)-ubiquitinyl-[acceptor protein]-L-lysine.. It participates in protein modification; protein ubiquitination. Functionally, functions as an E3 ubiquitin ligase. This chain is Putative U-box domain-containing protein 50 (PUB50), found in Arabidopsis thaliana (Mouse-ear cress).